A 125-amino-acid chain; its full sequence is Small ribosomal subunit protein uS12 (125 aa).

The interval 1–31 (MPTINQLVRHGRQTEVTKSKSPAMQGGPQRR) is disordered. Position 89 is a 3-methylthioaspartic acid (Asp89). The disordered stretch occupies residues 105-125 (QGVKDRKQSRSKYGAKRPKKA). The segment covering 113–125 (SRSKYGAKRPKKA) has biased composition (basic residues).

Belongs to the universal ribosomal protein uS12 family. As to quaternary structure, part of the 30S ribosomal subunit. Contacts proteins S8 and S17. May interact with IF1 in the 30S initiation complex.

Its function is as follows. With S4 and S5 plays an important role in translational accuracy. Interacts with and stabilizes bases of the 16S rRNA that are involved in tRNA selection in the A site and with the mRNA backbone. Located at the interface of the 30S and 50S subunits, it traverses the body of the 30S subunit contacting proteins on the other side and probably holding the rRNA structure together. The combined cluster of proteins S8, S12 and S17 appears to hold together the shoulder and platform of the 30S subunit. This chain is Small ribosomal subunit protein uS12, found in Methylibium petroleiphilum (strain ATCC BAA-1232 / LMG 22953 / PM1).